The following is a 241-amino-acid chain: Large ribosomal subunit protein uL13c (241 aa).

A chloroplast-targeting transit peptide spans 1–50 (MAVLCSSSTVILSSSSVKSSGSERKSPFLGFSLTAISKPSVRVGIYANSK).

It belongs to the universal ribosomal protein uL13 family. In terms of assembly, part of the 50S ribosomal subunit.

It is found in the plastid. The protein localises to the chloroplast. The sequence is that of Large ribosomal subunit protein uL13c (RPL13) from Arabidopsis thaliana (Mouse-ear cress).